The primary structure comprises 56 residues: Male-specific sperm protein Mst87F (56 aa).

The protein belongs to the MST(3)CGP family. Testis.

The chain is Male-specific sperm protein Mst87F (Mst87F) from Drosophila melanogaster (Fruit fly).